Reading from the N-terminus, the 92-residue chain is Cytochrome c2 (92 aa).

Cysteine 12, cysteine 15, histidine 16, and methionine 66 together coordinate heme c.

Belongs to the cytochrome c family. In terms of processing, binds 1 heme c group covalently per subunit.

Functionally, cytochrome c2 is found mainly in purple, non-sulfur, photosynthetic bacteria where it functions as the electron donor to the oxidized bacteriochlorophyll in the photophosphorylation pathway. However, it may also have a role in the respiratory chain and is found in some non-photosynthetic bacteria. The sequence is that of Cytochrome c2 from Rhodocyclus tenuis (Rhodospirillum tenue).